Here is a 198-residue protein sequence, read N- to C-terminus: MVNYPHKLSSQKRQPSLSQPKNFANRGMSFEKMINATNDYYLSQGLAVIHKKPTPIQIVRVDYPQRSRAKIVEAYFRQASTTDYSGVYNGYYIDFEAKETKQKRAIPMKNFHPHQIQHMEQILAQQGICFVLLHFSSQQETYLLPAYDLIRFYHQDKGQKSMPLGYIREYGYEIKAGAFPQIPYLNVIKEHLLGGKTR.

A disordered region spans residues 1 to 21 (MVNYPHKLSSQKRQPSLSQPK). The segment covering 11–21 (QKRQPSLSQPK) has biased composition (polar residues). 4 residues coordinate Mg(2+): Thr81, Asp83, Glu96, and Gln115.

The protein belongs to the RecU family. Requires Mg(2+) as cofactor.

The protein localises to the cytoplasm. It carries out the reaction Endonucleolytic cleavage at a junction such as a reciprocal single-stranded crossover between two homologous DNA duplexes (Holliday junction).. Functionally, endonuclease that resolves Holliday junction intermediates in genetic recombination. Cleaves mobile four-strand junctions by introducing symmetrical nicks in paired strands. Promotes annealing of linear ssDNA with homologous dsDNA. Required for DNA repair, homologous recombination and chromosome segregation. The protein is Holliday junction resolvase RecU of Streptococcus pneumoniae (strain Taiwan19F-14).